Consider the following 1056-residue polypeptide: Carbamoyl phosphate synthase large chain (1056 aa).

The segment at 1-399 (MKIDVSKVIV…AFQKAIRMLD (399 aa)) is carboxyphosphate synthetic domain. The ATP site is built by arginine 127, arginine 167, glycine 173, glycine 174, lysine 206, leucine 208, glutamate 213, glycine 239, valine 240, histidine 241, glutamine 282, and glutamate 296. Residues 131 to 325 (QKTMKKVGLP…LAYIATKLAI (195 aa)) form the ATP-grasp 1 domain. Mg(2+) is bound by residues glutamine 282, glutamate 296, and asparagine 298. Residues glutamine 282, glutamate 296, and asparagine 298 each contribute to the Mn(2+) site. The tract at residues 400-536 (IGDELIGKYY…VTYDGVENDI (137 aa)) is oligomerization domain. A carbamoyl phosphate synthetic domain region spans residues 537–919 (PKPKKPSILV…LKSWLSVKPN (383 aa)). One can recognise an ATP-grasp 2 domain in the interval 661–849 (SKLLEKLGIP…LMELSAQAVL (189 aa)). ATP is bound by residues arginine 697, lysine 736, isoleucine 738, glutamate 742, glycine 766, valine 767, histidine 768, serine 769, glutamine 809, and glutamate 820. Positions 809, 820, and 822 each coordinate Mg(2+). The Mn(2+) site is built by glutamine 809, glutamate 820, and asparagine 822. The MGS-like domain maps to 915–1043 (SVKPNELPKT…REYWIRKIEE (129 aa)). The interval 920 to 1056 (ELPKTSALIY…EYAASVVLRR (137 aa)) is allosteric domain.

Belongs to the CarB family. In terms of assembly, composed of two chains; the small (or glutamine) chain promotes the hydrolysis of glutamine to ammonia, which is used by the large (or ammonia) chain to synthesize carbamoyl phosphate. Tetramer of heterodimers (alpha,beta)4. It depends on Mg(2+) as a cofactor. Mn(2+) is required as a cofactor.

The catalysed reaction is hydrogencarbonate + L-glutamine + 2 ATP + H2O = carbamoyl phosphate + L-glutamate + 2 ADP + phosphate + 2 H(+). It catalyses the reaction hydrogencarbonate + NH4(+) + 2 ATP = carbamoyl phosphate + 2 ADP + phosphate + 2 H(+). It participates in amino-acid biosynthesis; L-arginine biosynthesis; carbamoyl phosphate from bicarbonate: step 1/1. It functions in the pathway pyrimidine metabolism; UMP biosynthesis via de novo pathway; (S)-dihydroorotate from bicarbonate: step 1/3. Its function is as follows. Large subunit of the glutamine-dependent carbamoyl phosphate synthetase (CPSase). CPSase catalyzes the formation of carbamoyl phosphate from the ammonia moiety of glutamine, carbonate, and phosphate donated by ATP, constituting the first step of 2 biosynthetic pathways, one leading to arginine and/or urea and the other to pyrimidine nucleotides. The large subunit (synthetase) binds the substrates ammonia (free or transferred from glutamine from the small subunit), hydrogencarbonate and ATP and carries out an ATP-coupled ligase reaction, activating hydrogencarbonate by forming carboxy phosphate which reacts with ammonia to form carbamoyl phosphate. This Pyrococcus furiosus (strain ATCC 43587 / DSM 3638 / JCM 8422 / Vc1) protein is Carbamoyl phosphate synthase large chain.